A 227-amino-acid polypeptide reads, in one-letter code: Germin-like protein subfamily 3 member 2 (227 aa).

The N-terminal stretch at 1 to 24 is a signal peptide; that stretch reads MEANTLFLLKALCLLCFNVCFTLA. An intrachain disulfide couples Cys-34 to Cys-54. 2 N-linked (GlcNAc...) asparagine glycosylation sites follow: Asn-56 and Asn-75. Residues 68–213 enclose the Cupin type-1 domain; it reads SGLKTAGNFT…AFGLSLKQIG (146 aa). Mn(2+) contacts are provided by His-115, His-117, Glu-122, and His-161.

Belongs to the germin family. Oligomer (believed to be a pentamer but probably hexamer).

Its subcellular location is the secreted. It localises to the extracellular space. The protein localises to the apoplast. In terms of biological role, may play a role in plant defense. Probably has no oxalate oxidase activity even if the active site is conserved. This Arabidopsis thaliana (Mouse-ear cress) protein is Germin-like protein subfamily 3 member 2.